Consider the following 299-residue polypeptide: Tyrosine recombinase XerD (299 aa).

A Core-binding (CB) domain is found at Glu-2–Leu-89. Positions Arg-110–Ala-293 constitute a Tyr recombinase domain. Catalysis depends on residues Arg-150, Lys-174, His-245, Arg-248, and His-271. The O-(3'-phospho-DNA)-tyrosine intermediate role is filled by Tyr-280.

The protein belongs to the 'phage' integrase family. XerD subfamily. Forms a cyclic heterotetrameric complex composed of two molecules of XerC and two molecules of XerD.

It localises to the cytoplasm. Functionally, site-specific tyrosine recombinase, which acts by catalyzing the cutting and rejoining of the recombining DNA molecules. The XerC-XerD complex is essential to convert dimers of the bacterial chromosome into monomers to permit their segregation at cell division. It also contributes to the segregational stability of plasmids. The sequence is that of Tyrosine recombinase XerD from Halalkalibacterium halodurans (strain ATCC BAA-125 / DSM 18197 / FERM 7344 / JCM 9153 / C-125) (Bacillus halodurans).